A 488-amino-acid polypeptide reads, in one-letter code: Bifunctional protein HldE (488 aa).

The interval 1–330 (MDRKSIESIF…NAVALAHSDS (330 aa)) is ribokinase. 205–208 (NRRE) is a binding site for ATP. Asp-275 is an active-site residue. The interval 356–488 (FTNGCFDLLH…IIERVLERYS (133 aa)) is cytidylyltransferase.

It in the N-terminal section; belongs to the carbohydrate kinase PfkB family. The protein in the C-terminal section; belongs to the cytidylyltransferase family. Homodimer.

The enzyme catalyses D-glycero-beta-D-manno-heptose 7-phosphate + ATP = D-glycero-beta-D-manno-heptose 1,7-bisphosphate + ADP + H(+). It carries out the reaction D-glycero-beta-D-manno-heptose 1-phosphate + ATP + H(+) = ADP-D-glycero-beta-D-manno-heptose + diphosphate. It participates in nucleotide-sugar biosynthesis; ADP-L-glycero-beta-D-manno-heptose biosynthesis; ADP-L-glycero-beta-D-manno-heptose from D-glycero-beta-D-manno-heptose 7-phosphate: step 1/4. Its pathway is nucleotide-sugar biosynthesis; ADP-L-glycero-beta-D-manno-heptose biosynthesis; ADP-L-glycero-beta-D-manno-heptose from D-glycero-beta-D-manno-heptose 7-phosphate: step 3/4. In terms of biological role, catalyzes the phosphorylation of D-glycero-D-manno-heptose 7-phosphate at the C-1 position to selectively form D-glycero-beta-D-manno-heptose-1,7-bisphosphate. Functionally, catalyzes the ADP transfer from ATP to D-glycero-beta-D-manno-heptose 1-phosphate, yielding ADP-D-glycero-beta-D-manno-heptose. This chain is Bifunctional protein HldE, found in Pelobacter propionicus (strain DSM 2379 / NBRC 103807 / OttBd1).